Here is a 373-residue protein sequence, read N- to C-terminus: 4-hydroxy-3-methylbut-2-en-1-yl diphosphate synthase (flavodoxin) (373 aa).

The [4Fe-4S] cluster site is built by Cys270, Cys273, Cys305, and Glu312.

It belongs to the IspG family. The cofactor is [4Fe-4S] cluster.

The enzyme catalyses (2E)-4-hydroxy-3-methylbut-2-enyl diphosphate + oxidized [flavodoxin] + H2O + 2 H(+) = 2-C-methyl-D-erythritol 2,4-cyclic diphosphate + reduced [flavodoxin]. It participates in isoprenoid biosynthesis; isopentenyl diphosphate biosynthesis via DXP pathway; isopentenyl diphosphate from 1-deoxy-D-xylulose 5-phosphate: step 5/6. Functionally, converts 2C-methyl-D-erythritol 2,4-cyclodiphosphate (ME-2,4cPP) into 1-hydroxy-2-methyl-2-(E)-butenyl 4-diphosphate. In Photorhabdus laumondii subsp. laumondii (strain DSM 15139 / CIP 105565 / TT01) (Photorhabdus luminescens subsp. laumondii), this protein is 4-hydroxy-3-methylbut-2-en-1-yl diphosphate synthase (flavodoxin).